The chain runs to 104 residues: Protein Rev (104 aa).

At Ser-5 the chain carries Phosphoserine; by host CK2. The interval 18 to 26 is homomultimerization; the sequence is VIKILYQSN. A compositionally biased stretch (polar residues) spans 25–34; that stretch reads SNPYPNSKGT. 2 disordered regions span residues 25-48 and 63-104; these read SNPY…WRAR and CLGG…ATTE. Residues 34–50 carry the Nuclear localization signal and RNA-binding (RRE) motif; that stretch reads TRQARRNRRRRWRARQR. Residues 35 to 48 are compositionally biased toward basic residues; that stretch reads RQARRNRRRRWRAR. Pro residues predominate over residues 67–77; sequence PPEPVDLPLPP. Positions 73–84 match the Nuclear export signal and binding to XPO1 motif; the sequence is LPLPPLDRLTLD. Residues 91 to 104 are compositionally biased toward polar residues; sequence TPGTESQQGTATTE.

It belongs to the HIV-1 REV protein family. In terms of assembly, homomultimer; when bound to the RRE. Multimeric assembly is essential for activity and may involve XPO1. Binds to human KPNB1, XPO1, TNPO1, RANBP5 and IPO7. Interacts with the viral Integrase. Interacts with human KHDRBS1. Interacts with human NAP1; this interaction decreases Rev multimerization and stimulates its activity. Interacts with human DEAD-box helicases DDX3 and DDX24; these interactions may serve for viral RNA export to the cytoplasm and packaging, respectively. Interacts with human PSIP1; this interaction may inhibit HIV-1 DNA integration by promoting dissociation of the Integrase-LEDGF/p75 complex. In terms of processing, asymmetrically arginine dimethylated at one site by host PRMT6. Methylation impairs the RNA-binding activity and export of viral RNA from the nucleus to the cytoplasm. Post-translationally, phosphorylated by protein kinase CK2. Presence of, and maybe binding to the N-terminus of the regulatory beta subunit of CK2 is necessary for CK2-mediated Rev's phosphorylation.

The protein resides in the host nucleus. It localises to the host nucleolus. Its subcellular location is the host cytoplasm. Its function is as follows. Escorts unspliced or incompletely spliced viral pre-mRNAs (late transcripts) out of the nucleus of infected cells. These pre-mRNAs carry a recognition sequence called Rev responsive element (RRE) located in the env gene, that is not present in fully spliced viral mRNAs (early transcripts). This function is essential since most viral proteins are translated from unspliced or partially spliced pre-mRNAs which cannot exit the nucleus by the pathway used by fully processed cellular mRNAs. Rev itself is translated from a fully spliced mRNA that readily exits the nucleus. Rev's nuclear localization signal (NLS) binds directly to KPNB1/Importin beta-1 without previous binding to KPNA1/Importin alpha-1. KPNB1 binds to the GDP bound form of RAN (Ran-GDP) and targets Rev to the nucleus. In the nucleus, the conversion from Ran-GDP to Ran-GTP dissociates Rev from KPNB1 and allows Rev's binding to the RRE in viral pre-mRNAs. Rev multimerization on the RRE via cooperative assembly exposes its nuclear export signal (NES) to the surface. Rev can then form a complex with XPO1/CRM1 and Ran-GTP, leading to nuclear export of the complex. Conversion from Ran-GTP to Ran-GDP mediates dissociation of the Rev/RRE/XPO1/RAN complex, so that Rev can return to the nucleus for a subsequent round of export. Beside KPNB1, also seems to interact with TNPO1/Transportin-1, RANBP5/IPO5 and IPO7/RANBP7 for nuclear import. The nucleoporin-like HRB/RIP is an essential cofactor that probably indirectly interacts with Rev to release HIV RNAs from the perinuclear region to the cytoplasm. The chain is Protein Rev from Human immunodeficiency virus type 1 group N (isolate YBF30) (HIV-1).